Consider the following 189-residue polypeptide: UPF0398 protein LCK_00599 (189 aa).

It belongs to the UPF0398 family.

In Leuconostoc citreum (strain KM20), this protein is UPF0398 protein LCK_00599.